Consider the following 259-residue polypeptide: HTH-type quorum sensing-dependent transcriptional regulator VjbR (259 aa).

The tract at residues 76-179 is C12-HSL binding; it reads KNYFAIDPVF…AGIIHGTVCG (104 aa). The 66-residue stretch at 183–248 folds into the HTH luxR-type domain; the sequence is ANSVASLLTP…SAVATALSLG (66 aa). A DNA-binding region (H-T-H motif) is located at residues 207 to 226; sequence DGEIAEILSIARWTVVTYLQ.

Functionally, transcriptional regulator involved in the global control of Brucella gene expression. Mediates the effects of the quorum sensing autoinducer C12-HSL (N-dodecanoyl-homoserine lactone) on a large and diverse number of genes. This chain is HTH-type quorum sensing-dependent transcriptional regulator VjbR (vjbR), found in Brucella suis biovar 1 (strain 1330).